The chain runs to 201 residues: MELVVKDVQNVLSVSEIIFARDFNEALIHQVVIAYSASTRQGTRAQKSRAEVSGSGRKPWRQKGTGRARAGSFRSPIWRSGGVTFAAKPQEHSQKVNKKMYRGALKSIFSELIRQKRLIVFENFSLDAPKTKLLVQKLKDINLKNVLIVTNKIDNNLFLASRNLYSVDVKDVHSIDPVSLIAFDHVVITVEAVKRIEEILS.

Residues arginine 44–alanine 68 are disordered.

The protein belongs to the universal ribosomal protein uL4 family. As to quaternary structure, part of the 50S ribosomal subunit.

Its function is as follows. One of the primary rRNA binding proteins, this protein initially binds near the 5'-end of the 23S rRNA. It is important during the early stages of 50S assembly. It makes multiple contacts with different domains of the 23S rRNA in the assembled 50S subunit and ribosome. In terms of biological role, forms part of the polypeptide exit tunnel. In Buchnera aphidicola subsp. Acyrthosiphon pisum (strain APS) (Acyrthosiphon pisum symbiotic bacterium), this protein is Large ribosomal subunit protein uL4.